We begin with the raw amino-acid sequence, 1054 residues long: Putative disease resistance RPP13-like protein 1 (1054 aa).

2 leucine-zipper regions span residues 9 to 20 and 39 to 53; these read LAAFLQALFQTL and LERL…TAVL. The stretch at 117 to 147 forms a coiled coil; the sequence is DFLDGNSEHLETRLEKVTIRLERLASQRNIL. In terms of domain architecture, NB-ARC spans 152 to 462; it reads LTAMIPKQRL…AEGFLQQTRS (311 aa). Residue 203 to 210 coordinates ATP; it reads GIGGVGKT. 5 LRR repeats span residues 579–600, 603–624, 626–648, 650–672, and 676–697; these read RLRV…FFKN, HARF…LCYM, NLQT…ISNL, NLRY…GRLK, and TLTT…GGLH. A disordered region spans residues 1018–1054; sequence PQYHHPQFHLPRSNVSGSPKSHGSHRSYDSRSSSRYD. The segment covering 1043–1054 has biased composition (basic and acidic residues); sequence RSYDSRSSSRYD.

It belongs to the disease resistance NB-LRR family. RPP13 subfamily.

Functionally, potential disease resistance protein. This Arabidopsis thaliana (Mouse-ear cress) protein is Putative disease resistance RPP13-like protein 1 (RPPL1).